Here is a 583-residue protein sequence, read N- to C-terminus: CTP synthase (583 aa).

The tract at residues 1-278 is amidoligase domain; that stretch reads MRRHPQTATK…DAFVVRRLNL (278 aa). S20 contacts CTP. Residue S20 participates in UTP binding. Residues 21-26 and D78 each bind ATP; that span reads SLGKGL. Mg(2+)-binding residues include D78 and E152. Residues 159–161, 199–204, and K235 each bind CTP; these read DIE and KTKPTQ. UTP is bound by residues 199–204 and K235; that span reads KTKPTQ. Residues 303-551 enclose the Glutamine amidotransferase type-1 domain; the sequence is RIALVGKYVE…VKAAIDYKEG (249 aa). G366 contacts L-glutamine. C393 functions as the Nucleophile; for glutamine hydrolysis in the catalytic mechanism. L-glutamine contacts are provided by residues 394 to 397, E416, and R477; that span reads LGLQ. Active-site residues include H524 and E526. Residues 559 to 583 form a disordered region; sequence PERVSNGAERRDQVGQSIPEPANRG.

It belongs to the CTP synthase family. In terms of assembly, homotetramer.

It carries out the reaction UTP + L-glutamine + ATP + H2O = CTP + L-glutamate + ADP + phosphate + 2 H(+). It catalyses the reaction L-glutamine + H2O = L-glutamate + NH4(+). The enzyme catalyses UTP + NH4(+) + ATP = CTP + ADP + phosphate + 2 H(+). It participates in pyrimidine metabolism; CTP biosynthesis via de novo pathway; CTP from UDP: step 2/2. With respect to regulation, allosterically activated by GTP, when glutamine is the substrate; GTP has no effect on the reaction when ammonia is the substrate. The allosteric effector GTP functions by stabilizing the protein conformation that binds the tetrahedral intermediate(s) formed during glutamine hydrolysis. Inhibited by the product CTP, via allosteric rather than competitive inhibition. Its function is as follows. Catalyzes the ATP-dependent amination of UTP to CTP with either L-glutamine or ammonia as the source of nitrogen. Regulates intracellular CTP levels through interactions with the four ribonucleotide triphosphates. This is CTP synthase from Mycobacterium ulcerans (strain Agy99).